A 70-amino-acid chain; its full sequence is Conotoxin Ep11.12 (70 aa).

The signal sequence occupies residues 1 to 26 (MMFRVTSVGCFLLVILSLNLVVLTNA). 4 disulfide bridges follow: Cys-27/Cys-41, Cys-34/Cys-46, Cys-40/Cys-50, and Cys-45/Cys-54. Position 57 is a proline amide (Pro-57). Positions 61–70 (AKLREFFRQR) are excised as a propeptide.

This sequence belongs to the conotoxin I2 superfamily. As to expression, expressed by the venom duct.

Its subcellular location is the secreted. In Conus episcopatus (Bishop's cone), this protein is Conotoxin Ep11.12.